Consider the following 245-residue polypeptide: Adenosine 5'-phosphosulfate reductase (245 aa).

Residues Cys-124, Cys-125, Cys-205, and Cys-208 each contribute to the [4Fe-4S] cluster site. The active-site Nucleophile; cysteine thiosulfonate intermediate is Cys-231.

The protein belongs to the PAPS reductase family. CysH subfamily. The cofactor is [4Fe-4S] cluster.

It is found in the cytoplasm. It carries out the reaction [thioredoxin]-disulfide + sulfite + AMP + 2 H(+) = adenosine 5'-phosphosulfate + [thioredoxin]-dithiol. The protein operates within sulfur metabolism; hydrogen sulfide biosynthesis; sulfite from sulfate. Catalyzes the formation of sulfite from adenosine 5'-phosphosulfate (APS) using thioredoxin as an electron donor. This Chelativorans sp. (strain BNC1) protein is Adenosine 5'-phosphosulfate reductase.